The following is a 128-amino-acid chain: Small ribosomal subunit protein uS12 (128 aa).

Asp89 carries the 3-methylthioaspartic acid modification.

It belongs to the universal ribosomal protein uS12 family. In terms of assembly, part of the 30S ribosomal subunit. Contacts proteins S8 and S17. May interact with IF1 in the 30S initiation complex.

Functionally, with S4 and S5 plays an important role in translational accuracy. Interacts with and stabilizes bases of the 16S rRNA that are involved in tRNA selection in the A site and with the mRNA backbone. Located at the interface of the 30S and 50S subunits, it traverses the body of the 30S subunit contacting proteins on the other side and probably holding the rRNA structure together. The combined cluster of proteins S8, S12 and S17 appears to hold together the shoulder and platform of the 30S subunit. The polypeptide is Small ribosomal subunit protein uS12 (Campylobacter jejuni subsp. jejuni serotype O:6 (strain 81116 / NCTC 11828)).